The sequence spans 248 residues: Cytochrome c oxidase subunit 2 (248 aa).

Residues 1-12 (MLLMNLFTIINN) form the signal peptide. Residues 13-39 (DVPTPYNMYFQDSTTPHQEGILELHDN) are Mitochondrial intermembrane-facing. Residues 40–61 (IMFYMLTVLGLVSWMMIIIIKD) form a helical membrane-spanning segment. The Mitochondrial matrix portion of the chain corresponds to 62–79 (YKNNPITYKYIKHGQMIE). A helical transmembrane segment spans residues 80 to 104 (IIWTILPAIILLMIAFPSFILLYLC). Over 105–248 (DEVISPAMTI…PTFLTWLNEQ (144 aa)) the chain is Mitochondrial intermembrane. Residues H183, C218, E220, C222, H226, and M229 each coordinate Cu cation. E220 provides a ligand contact to Mg(2+).

Belongs to the cytochrome c oxidase subunit 2 family. In terms of assembly, component of the cytochrome c oxidase (complex IV, CIV), a multisubunit enzyme composed of a catalytic core of 3 subunits and several supernumerary subunits. The complex exists as a monomer or a dimer and forms supercomplexes (SCs) in the inner mitochondrial membrane with ubiquinol-cytochrome c oxidoreductase (cytochrome b-c1 complex, complex III, CIII). Requires Cu cation as cofactor. Post-translationally, the signal sequence of COX2 is processed by IMP1.

The protein localises to the mitochondrion inner membrane. It carries out the reaction 4 Fe(II)-[cytochrome c] + O2 + 8 H(+)(in) = 4 Fe(III)-[cytochrome c] + 2 H2O + 4 H(+)(out). In terms of biological role, component of the cytochrome c oxidase, the last enzyme in the mitochondrial electron transport chain which drives oxidative phosphorylation. The respiratory chain contains 3 multisubunit complexes succinate dehydrogenase (complex II, CII), ubiquinol-cytochrome c oxidoreductase (cytochrome b-c1 complex, complex III, CIII) and cytochrome c oxidase (complex IV, CIV), that cooperate to transfer electrons derived from NADH and succinate to molecular oxygen, creating an electrochemical gradient over the inner membrane that drives transmembrane transport and the ATP synthase. Cytochrome c oxidase is the component of the respiratory chain that catalyzes the reduction of oxygen to water. Electrons originating from reduced cytochrome c in the intermembrane space (IMS) are transferred via the dinuclear copper A center (CU(A)) of subunit 2 and heme A of subunit 1 to the active site in subunit 1, a binuclear center (BNC) formed by heme A3 and copper B (CU(B)). The BNC reduces molecular oxygen to 2 water molecules using 4 electrons from cytochrome c in the IMS and 4 protons from the mitochondrial matrix. The sequence is that of Cytochrome c oxidase subunit 2 (COX2) from Eremothecium gossypii (strain ATCC 10895 / CBS 109.51 / FGSC 9923 / NRRL Y-1056) (Yeast).